Reading from the N-terminus, the 285-residue chain is Inositol oxygenase (285 aa).

Substrate is bound at residue R29. At S33 the chain carries Phosphoserine. Residue D85–S87 participates in substrate binding. Residues H98, H123, and D124 each coordinate Fe cation. Residues K127 and G141–D142 contribute to the substrate site. Positions 194, 220, and 253 each coordinate Fe cation. Residue H220–S221 participates in substrate binding.

This sequence belongs to the myo-inositol oxygenase family. It depends on Fe cation as a cofactor. As to expression, kidney specific.

The protein resides in the cytoplasm. It carries out the reaction myo-inositol + O2 = D-glucuronate + H2O + H(+). The protein operates within polyol metabolism; myo-inositol degradation into D-glucuronate; D-glucuronate from myo-inositol: step 1/1. The polypeptide is Inositol oxygenase (Miox) (Rattus norvegicus (Rat)).